The sequence spans 1437 residues: Myomesin-3 (1437 aa).

The interval 1 to 49 is disordered; that stretch reads MTLPHSLGGAGDPRPPQAMEVHRLEHRQEEEQKEERQHSLRMGSSVRRR. The segment covering 20 to 38 has biased composition (basic and acidic residues); the sequence is EVHRLEHRQEEEQKEERQH. Positions 120-149 form a coiled coil; sequence RLLRQRRDWKTLRRRTEEKVQEAKELRELC. Ig-like C2-type domains lie at 154 to 246 and 269 to 361; these read PWFW…AKVL and PSVE…TYVL. Fibronectin type-III domains are found at residues 375-469, 503-598, 604-696, 702-797, and 804-899; these read SPLN…VMGD, PPTN…LRGP, PPAQ…VKQA, APYG…CKEW, and PPYD…LEDK. Ig-like C2-type domains follow at residues 1120–1205 and 1334–1423; these read PYFE…LDLT and AKVV…VTIS.

As to quaternary structure, homodimer.

The protein resides in the cytoplasm. Its subcellular location is the myofibril. The protein localises to the sarcomere. It localises to the m line. Functionally, may link the intermediate filament cytoskeleton to the M-disk of the myofibrils in striated muscle. This Homo sapiens (Human) protein is Myomesin-3 (MYOM3).